Reading from the N-terminus, the 355-residue chain is Myricetin 7/4'-O-methyltransferase 2 (355 aa).

Position 221 (D221) interacts with S-adenosyl-L-methionine. H259 functions as the Proton acceptor in the catalytic mechanism.

This sequence belongs to the class I-like SAM-binding methyltransferase superfamily. Cation-independent O-methyltransferase family. Homodimer. In terms of tissue distribution, mainly expressed in leaves secreting glandular trichomes types 1 and 4 and, to a lesser extent, in storage trichomes type 6.

The catalysed reaction is quercetin + S-adenosyl-L-methionine = rhamnetin + S-adenosyl-L-homocysteine + H(+). It catalyses the reaction kaempferol + S-adenosyl-L-methionine = kaempferide + S-adenosyl-L-homocysteine + H(+). It carries out the reaction myricetin + S-adenosyl-L-methionine = 7-O-methylmyricetin + S-adenosyl-L-homocysteine + H(+). The enzyme catalyses kaempferide + S-adenosyl-L-methionine = 7,4'-O-dimethylkaempferol + S-adenosyl-L-homocysteine + H(+). The catalysed reaction is isorhamnetin + S-adenosyl-L-methionine = 3',4'-O-dimethylquercetin + S-adenosyl-L-homocysteine + 2 H(+). It catalyses the reaction 3',4',5,7-tetrahydroxy-3-methoxyflavone + S-adenosyl-L-methionine = 3',4',5-trihydroxy-3,7-dimethoxyflavone + S-adenosyl-L-homocysteine + H(+). It carries out the reaction rhamnetin + S-adenosyl-L-methionine = 7,4'-O-dimethylquercetin + S-adenosyl-L-homocysteine + H(+). The enzyme catalyses syringetin + S-adenosyl-L-methionine = 7,3',5'-O-trimethylmyricetin + S-adenosyl-L-homocysteine + H(+). The catalysed reaction is 3',4',5'-O-trimethylmyricetin + S-adenosyl-L-methionine = 7,3',4',5'-O-tetramethylmyricetin + S-adenosyl-L-homocysteine. Its pathway is flavonoid metabolism. Functionally, flavonoid 7/4'-O-methyltransferase involved in the biosynthesis of polymethoxylated flavonoids natural products such as myricetin derivatives, aroma compounds possessing antioxidant properties and exhibiting pharmacological activities such as anti-carcinogen, anti-viral, anti-thrombotic, anti-diabetic, anti-atherosclerotic, and anti-inflammatory effects. Catalyzes S-adenosylmethionine-dependent regioselective 7/4'-O-methylation of flavonoids; active on various hydroxylated flavonoid substrates, including myricetin, quercetin and kaempferol. Mediates the formation of 4'-methyl derivatives from kaempferol, 3'-methyl quercetin (isorhamnetin), 7-methyl quercetin (rhamnetin) and 3'-methyl myricetin, producing 4'-methyl kaempferol (kaempferide), 3',4'-dimethyl quercetin (4'-O-methyl isorhamnetin), 7,4'-dimethyl quercetin (4'-O-methyl rhamnetin, rhamnacene) and 3',4'-dimethyl myricetin, respectively. Triggers the 7-O-methylation of quercetin, myricetin, 4'-methyl kaempferol (kaempferide), 3-methyl quercetin, 3',5'-dimethyl myricetin (syringetin) and 3',4',5'-trimethyl myricetin, thus leading to production of 7-methyl quercetin (rhamnetin), 7-methyl myricetin, 7,4'-dimethyl kaempferol (7-O-methyl kaempferide), 3,7-dimethyl quercetin, 7,3',5'-trimethyl myricetin (7-O-methyl syringetin) and 7,3',4',5'-tetramethyl myricetin, respectively. In Solanum habrochaites (Wild tomato), this protein is Myricetin 7/4'-O-methyltransferase 2.